The primary structure comprises 221 residues: Coiled-coil domain-containing protein 70 (221 aa).

The stretch at 129 to 168 forms a coiled coil; the sequence is NALWEKDRNLLQEDKALWEEEKALWVEERALLEEEKALWE.

The protein is Coiled-coil domain-containing protein 70 (CCDC70) of Macaca fascicularis (Crab-eating macaque).